Here is a 572-residue protein sequence, read N- to C-terminus: Hexokinase (572 aa).

The Hexokinase domain occupies 49–492 (DEPPISLETV…SGKGAALITA (444 aa)). Residues 105–237 (NGTEEGRFIA…DIKVEVVALI (133 aa)) form a hexokinase small subdomain region. D-glucose 6-phosphate contacts are provided by residues 116-120 (DLGGT) and Ser-185. 116-121 (DLGGTN) contacts ATP. Residues 185–186 (SY), 202–203 (TK), and 238–239 (ND) each bind substrate. A hexokinase large subdomain region spans residues 238–481 (NDTVGTMVAA…LKFKLLQTAD (244 aa)). Residues Asp-239 and Thr-263 each contribute to the D-glucose 6-phosphate site. Residue Thr-263 coordinates ATP. Substrate is bound by residues Asn-266, Glu-297, and Asp-331. ATP is bound by residues 336 to 337 (GK), 373 to 377 (TKYIS), and 448 to 452 (STYKY). Residues 446-448 (DGS) and Ser-483 each bind D-glucose 6-phosphate.

Belongs to the hexokinase family.

The enzyme catalyses a D-hexose + ATP = a D-hexose 6-phosphate + ADP + H(+). It catalyses the reaction D-mannose + ATP = D-mannose 6-phosphate + ADP + H(+). It carries out the reaction D-fructose + ATP = D-fructose 6-phosphate + ADP + H(+). The catalysed reaction is D-glucose + ATP = D-glucose 6-phosphate + ADP + H(+). The protein operates within carbohydrate metabolism; hexose metabolism. It participates in carbohydrate degradation; glycolysis; D-glyceraldehyde 3-phosphate and glycerone phosphate from D-glucose: step 1/4. Its activity is regulated as follows. Activated by glucose-6-phosphate. Inhibited by N-acetylglucosamine, glucosamine, mannoheptulose and ADP. Active against glucose, fructose, mannose, maltose and galactose. The polypeptide is Hexokinase (Brugia malayi (Filarial nematode worm)).